Consider the following 396-residue polypeptide: Small ribosomal subunit protein uS9m (396 aa).

An N6-acetyllysine modification is found at K287. Residues 374-396 (PRVRERKKPGQEGARRKFTWKKR) form a disordered region.

This sequence belongs to the universal ribosomal protein uS9 family. Component of the mitochondrial small ribosomal subunit (mt-SSU). Mature mammalian 55S mitochondrial ribosomes consist of a small (28S) and a large (39S) subunit. The 28S small subunit contains a 12S ribosomal RNA (12S mt-rRNA) and 30 different proteins. The 39S large subunit contains a 16S rRNA (16S mt-rRNA), a copy of mitochondrial valine transfer RNA (mt-tRNA(Val)), which plays an integral structural role, and 52 different proteins.

The protein resides in the mitochondrion. This chain is Small ribosomal subunit protein uS9m (MRPS9), found in Homo sapiens (Human).